Reading from the N-terminus, the 279-residue chain is NAD kinase (279 aa).

The active-site Proton acceptor is D57. Residues 57 to 58 (DG), 133 to 134 (NE), R159, D161, and 172 to 177 (TAYNKS) each bind NAD(+).

The protein belongs to the NAD kinase family. Requires a divalent metal cation as cofactor.

The protein localises to the cytoplasm. It catalyses the reaction NAD(+) + ATP = ADP + NADP(+) + H(+). Its function is as follows. Involved in the regulation of the intracellular balance of NAD and NADP, and is a key enzyme in the biosynthesis of NADP. Catalyzes specifically the phosphorylation on 2'-hydroxyl of the adenosine moiety of NAD to yield NADP. This Streptococcus pyogenes serotype M28 (strain MGAS6180) protein is NAD kinase.